A 422-amino-acid chain; its full sequence is RNA exonuclease 4 (422 aa).

The interval Met1–Ile194 is disordered. Position 15 is a phosphoserine (Ser15). The span at Leu26–Ser40 shows a compositional bias: basic residues. A phosphoserine mark is found at Ser96 and Ser111. 2 stretches are compositionally biased toward basic and acidic residues: residues Asn106–Ala127 and Gly151–His176. A Glycyl lysine isopeptide (Lys-Gly) (interchain with G-Cter in SUMO2) cross-link involves residue Lys115. Positions Ala243–Tyr394 constitute an Exonuclease domain.

It belongs to the REXO4 family. Can bind ESR1 and ESR2. This interaction is abrogated by estrogen and augmented by tamoxifen treatment.

The protein localises to the nucleus. It localises to the nucleolus. The protein is RNA exonuclease 4 (REXO4) of Homo sapiens (Human).